The chain runs to 334 residues: Glyceraldehyde-3-phosphate dehydrogenase (334 aa).

NAD(+)-binding positions include 12 to 13 and Gly-111; that span reads TI. 140–142 serves as a coordination point for D-glyceraldehyde 3-phosphate; the sequence is SCN. Catalysis depends on Cys-141, which acts as the Nucleophile. Residue Arg-167 participates in NAD(+) binding. 192–193 serves as a coordination point for D-glyceraldehyde 3-phosphate; it reads HG. Gln-298 serves as a coordination point for NAD(+).

This sequence belongs to the glyceraldehyde-3-phosphate dehydrogenase family. In terms of assembly, homotetramer.

It is found in the cytoplasm. It carries out the reaction D-glyceraldehyde 3-phosphate + phosphate + NADP(+) = (2R)-3-phospho-glyceroyl phosphate + NADPH + H(+). It catalyses the reaction D-glyceraldehyde 3-phosphate + phosphate + NAD(+) = (2R)-3-phospho-glyceroyl phosphate + NADH + H(+). It functions in the pathway carbohydrate degradation; glycolysis; pyruvate from D-glyceraldehyde 3-phosphate: step 1/5. In Thermococcus sibiricus (strain DSM 12597 / MM 739), this protein is Glyceraldehyde-3-phosphate dehydrogenase.